The chain runs to 87 residues: Apolipoprotein C-I (87 aa).

A signal peptide spans 1-26; sequence MRFILSLPVLAVVLAMVLEGPAPAQA.

The protein belongs to the apolipoprotein C1 family.

Its subcellular location is the secreted. Functionally, inhibitor of lipoprotein binding to the low density lipoprotein (LDL) receptor, LDL receptor-related protein, and very low density lipoprotein (VLDL) receptor. Associates with high density lipoproteins (HDL) and the triacylglycerol-rich lipoproteins in the plasma and makes up about 10% of the protein of the VLDL and 2% of that of HDL. Appears to interfere directly with fatty acid uptake and is also the major plasma inhibitor of cholesteryl ester transfer protein (CETP). Binds free fatty acids and reduces their intracellular esterification. Modulates the interaction of APOE with beta-migrating VLDL and inhibits binding of beta-VLDL to the LDL receptor-related protein. This is Apolipoprotein C-I (APOC1) from Pteropus alecto (Black flying fox).